The following is a 208-amino-acid chain: Protein-L-isoaspartate O-methyltransferase (208 aa).

Residue Ser-59 is part of the active site.

The protein belongs to the methyltransferase superfamily. L-isoaspartyl/D-aspartyl protein methyltransferase family.

The protein resides in the cytoplasm. The enzyme catalyses [protein]-L-isoaspartate + S-adenosyl-L-methionine = [protein]-L-isoaspartate alpha-methyl ester + S-adenosyl-L-homocysteine. Functionally, catalyzes the methyl esterification of L-isoaspartyl residues in peptides and proteins that result from spontaneous decomposition of normal L-aspartyl and L-asparaginyl residues. It plays a role in the repair and/or degradation of damaged proteins. The protein is Protein-L-isoaspartate O-methyltransferase of Escherichia coli (strain K12 / MC4100 / BW2952).